The sequence spans 128 residues: Fluoride-specific ion channel FluC (128 aa).

4 consecutive transmembrane segments (helical) span residues 5-25, 35-55, 67-87, and 96-116; these read IVAI…LSIG, LGTL…VVAF, LFVI…SVEV, and FGWA…LTGL. Na(+)-binding residues include G75 and T78.

It belongs to the fluoride channel Fluc/FEX (TC 1.A.43) family.

The protein localises to the cell inner membrane. The enzyme catalyses fluoride(in) = fluoride(out). With respect to regulation, na(+) is not transported, but it plays an essential structural role and its presence is essential for fluoride channel function. In terms of biological role, fluoride-specific ion channel. Important for reducing fluoride concentration in the cell, thus reducing its toxicity. This chain is Fluoride-specific ion channel FluC, found in Burkholderia mallei (strain NCTC 10247).